The primary structure comprises 465 residues: Sensor histidine kinase ZraS (465 aa).

Topologically, residues 1–14 (MSFIRLHKDAAAMW) are cytoplasmic. A helical transmembrane segment spans residues 15–35 (LSRLLPAAIFILVGLFSIMVI). The Periplasmic segment spans residues 36-203 (RDYGRESAAA…ATQAREWRNT (168 aa)). The helical transmembrane segment at 204–224 (LIVLSALAAVLLATLLAFFWY) threads the bilayer. Over 225 to 465 (QRYQRSHREL…WLPVIARQQD (241 aa)) the chain is Cytoplasmic. The Histidine kinase domain maps to 253-461 (GVAHEIRNPL…VFTIWLPVIA (209 aa)). His256 carries the phosphohistidine; by autocatalysis modification.

Autophosphorylated.

It is found in the cell inner membrane. The enzyme catalyses ATP + protein L-histidine = ADP + protein N-phospho-L-histidine.. Its activity is regulated as follows. Activity of the ZraS/ZraR two-component system is repressed by the zinc-bound form of ZraP, which probably interacts with the periplasmic region of ZraS. Part of the Zra signaling pathway, an envelope stress response (ESR) system composed of the periplasmic accessory protein ZraP, the histidine kinase ZraS and the transcriptional regulator ZraR. The ZraPSR system contributes to antibiotic resistance and is important for membrane integrity in the presence of membrane-targeting biocides. ZraS is a member of the two-component regulatory system ZraS/ZraR. Functions as a membrane-associated sensor kinase that phosphorylates ZraR in response to high concentrations of Zn(2+) or Pb(2+) in the medium. The protein is Sensor histidine kinase ZraS (zraS) of Salmonella typhi.